The sequence spans 134 residues: ATP synthase epsilon chain (134 aa).

This sequence belongs to the ATPase epsilon chain family. F-type ATPases have 2 components, CF(1) - the catalytic core - and CF(0) - the membrane proton channel. CF(1) has five subunits: alpha(3), beta(3), gamma(1), delta(1), epsilon(1). CF(0) has three main subunits: a, b and c.

The protein localises to the cellular thylakoid membrane. In terms of biological role, produces ATP from ADP in the presence of a proton gradient across the membrane. In Prochlorococcus marinus (strain MIT 9301), this protein is ATP synthase epsilon chain.